The chain runs to 71 residues: Small ribosomal subunit protein bS21 (71 aa).

The protein belongs to the bacterial ribosomal protein bS21 family.

The sequence is that of Small ribosomal subunit protein bS21 from Marinobacter nauticus (strain ATCC 700491 / DSM 11845 / VT8) (Marinobacter aquaeolei).